The chain runs to 320 residues: Cytochrome f (320 aa).

The signal sequence occupies residues M1–A35. The heme site is built by Y36, C56, C59, and H60. Residues V286–L305 traverse the membrane as a helical segment.

This sequence belongs to the cytochrome f family. The 4 large subunits of the cytochrome b6-f complex are cytochrome b6, subunit IV (17 kDa polypeptide, petD), cytochrome f and the Rieske protein, while the 4 small subunits are PetG, PetL, PetM and PetN. The complex functions as a dimer. Requires heme as cofactor.

The protein localises to the plastid. It is found in the chloroplast thylakoid membrane. Its function is as follows. Component of the cytochrome b6-f complex, which mediates electron transfer between photosystem II (PSII) and photosystem I (PSI), cyclic electron flow around PSI, and state transitions. This Vicia faba (Broad bean) protein is Cytochrome f (petA).